Consider the following 138-residue polypeptide: Basic phospholipase A2 homolog G6K49 (138 aa).

A signal peptide spans 1 to 16 (MRTLWIMAVLLLGVEG). 7 disulfide bridges follow: C42–C132, C44–C60, C59–C112, C65–C138, C66–C105, C73–C98, and C91–C103. Residues 122–133 (KKHRVTVKFLCK) form an important for membrane-damaging activities in eukaryotes and bacteria; heparin-binding region.

Belongs to the phospholipase A2 family. Group II subfamily. K49 sub-subfamily. Homodimer; non-covalently linked. As to expression, expressed by the venom gland.

The protein localises to the secreted. Its function is as follows. Snake venom phospholipase A2 (PLA2) that lacks enzymatic activity. Displays myotoxic activities. A model of myotoxic mechanism has been proposed: an apo Lys49-PLA2 is activated by the entrance of a hydrophobic molecule (e.g. fatty acid) at the hydrophobic channel of the protein leading to a reorientation of a monomer. This reorientation causes a transition between 'inactive' to 'active' states, causing alignment of C-terminal and membrane-docking sites (MDoS) side-by-side and putting the membrane-disruption sites (MDiS) in the same plane, exposed to solvent and in a symmetric position for both monomers. The MDoS region stabilizes the toxin on membrane by the interaction of charged residues with phospholipid head groups. Subsequently, the MDiS region destabilizes the membrane with penetration of hydrophobic residues. This insertion causes a disorganization of the membrane, allowing an uncontrolled influx of ions (i.e. calcium and sodium), and eventually triggering irreversible intracellular alterations and cell death. The polypeptide is Basic phospholipase A2 homolog G6K49 (Calloselasma rhodostoma (Malayan pit viper)).